We begin with the raw amino-acid sequence, 306 residues long: UDP-N-acetylenolpyruvoylglucosamine reductase (306 aa).

In terms of domain architecture, FAD-binding PCMH-type spans 34–198 (VGGPADLLIT…LEVTFKLHNS (165 aa)). Arg177 is an active-site residue. The Proton donor role is filled by Ser227. Residue Glu297 is part of the active site.

This sequence belongs to the MurB family. The cofactor is FAD.

It is found in the cytoplasm. It catalyses the reaction UDP-N-acetyl-alpha-D-muramate + NADP(+) = UDP-N-acetyl-3-O-(1-carboxyvinyl)-alpha-D-glucosamine + NADPH + H(+). It functions in the pathway cell wall biogenesis; peptidoglycan biosynthesis. Its function is as follows. Cell wall formation. The protein is UDP-N-acetylenolpyruvoylglucosamine reductase of Clostridium botulinum (strain ATCC 19397 / Type A).